Reading from the N-terminus, the 46-residue chain is Large ribosomal subunit protein bL36B (46 aa).

Belongs to the bacterial ribosomal protein bL36 family.

The protein is Large ribosomal subunit protein bL36B of Cronobacter sakazakii (strain ATCC BAA-894) (Enterobacter sakazakii).